Reading from the N-terminus, the 423-residue chain is Histidine--tRNA ligase (423 aa).

Belongs to the class-II aminoacyl-tRNA synthetase family. In terms of assembly, homodimer.

Its subcellular location is the cytoplasm. It carries out the reaction tRNA(His) + L-histidine + ATP = L-histidyl-tRNA(His) + AMP + diphosphate + H(+). This Prochlorococcus marinus (strain MIT 9211) protein is Histidine--tRNA ligase.